Consider the following 360-residue polypeptide: Decorin (360 aa).

The first 16 residues, 1–16 (MKATIIFLLLAQVSWA), serve as a signal peptide directing secretion. Positions 17 to 30 (GPFQQRGLFDFMLE) are excised as a propeptide. Ser34 is a glycosylation site (O-linked (Xyl...) (glycosaminoglycan) serine). 2 disulfides stabilise this stretch: Cys55–Cys61 and Cys59–Cys68. LRR repeat units follow at residues 74–94 (DKVP…NNKI), 95–118 (TEIK…NNKI), 119–142 (SKIS…KNHL), 143–163 (KELP…ENEI), 164–187 (TKVR…TNPL), 188–213 (KSSG…DTNI), 214–234 (TTIP…GNKI), 235–258 (TKVD…FNSI), 259–282 (SAVD…NNKL), 283–305 (IRVP…NNNI), 306–335 (SAVG…SNPV), and 336–360 (QYWE…GNYK). Asn212 is a glycosylation site (N-linked (GlcNAc...) asparagine). N-linked (GlcNAc...) asparagine glycans are attached at residues Asn263 and Asn304. Cys314 and Cys347 are joined by a disulfide.

This sequence belongs to the small leucine-rich proteoglycan (SLRP) family. SLRP class I subfamily. As to quaternary structure, binds to type I and type II collagen, fibronectin and TGF-beta. Forms a ternary complex with MFAP2 and ELN. Interacts with DPT. Post-translationally, the attached glycosaminoglycan chain can be either chondroitin sulfate or dermatan sulfate depending upon the tissue of origin.

The protein resides in the secreted. It is found in the extracellular space. Its subcellular location is the extracellular matrix. In terms of biological role, may affect the rate of fibrils formation. This Canis lupus familiaris (Dog) protein is Decorin (DCN).